Reading from the N-terminus, the 183-residue chain is ATP synthase subunit b, chloroplastic (183 aa).

A helical membrane pass occupies residues 28 to 48; the sequence is DIFEANVINILLLLFGLIYVL.

Belongs to the ATPase B chain family. F-type ATPases have 2 components, F(1) - the catalytic core - and F(0) - the membrane proton channel. F(1) has five subunits: alpha(3), beta(3), gamma(1), delta(1), epsilon(1). F(0) has four main subunits: a(1), b(1), b'(1) and c(10-14). The alpha and beta chains form an alternating ring which encloses part of the gamma chain. F(1) is attached to F(0) by a central stalk formed by the gamma and epsilon chains, while a peripheral stalk is formed by the delta, b and b' chains.

It localises to the plastid. The protein localises to the chloroplast thylakoid membrane. F(1)F(0) ATP synthase produces ATP from ADP in the presence of a proton or sodium gradient. F-type ATPases consist of two structural domains, F(1) containing the extramembraneous catalytic core and F(0) containing the membrane proton channel, linked together by a central stalk and a peripheral stalk. During catalysis, ATP synthesis in the catalytic domain of F(1) is coupled via a rotary mechanism of the central stalk subunits to proton translocation. Functionally, component of the F(0) channel, it forms part of the peripheral stalk, linking F(1) to F(0). The polypeptide is ATP synthase subunit b, chloroplastic (Pyropia yezoensis (Susabi-nori)).